The primary structure comprises 633 residues: Copine-7 (633 aa).

2 C2 domains span residues 2–133 (SAGS…MRVS) and 212–339 (NAGK…AQWD). Asp245, Asp251, Asp307, Asp309, and Asp315 together coordinate Ca(2+). The region spanning 382–581 (HFTVAIDFTA…PALRDIVQFV (200 aa)) is the VWFA domain.

The protein belongs to the copine family. The cofactor is Ca(2+). In terms of tissue distribution, expressed in the brain, testis, thymus and small intestine.

The protein resides in the cytoplasm. Its subcellular location is the nucleus. It localises to the cell membrane. In terms of biological role, calcium-dependent phospholipid-binding protein that may play a role in calcium-mediated intracellular processes. The polypeptide is Copine-7 (Homo sapiens (Human)).